We begin with the raw amino-acid sequence, 224 residues long: Peroxiredoxin-6 (224 aa).

Residues 5–169 (LLLGDEAPNF…ILRVVDSLQL (165 aa)) enclose the Thioredoxin domain. The required and sufficient for targeting to lysosomes and lamellar bodies stretch occupies residues 31 to 40 (DSWGILFSHP). Thr-44 is subject to Phosphothreonine. The active-site Cysteine sulfenic acid (-SOH) intermediate; for peroxidase activity is Cys-47. Lys-63 is modified (N6-acetyllysine). Position 89 is a phosphotyrosine (Tyr-89). Asp-140 serves as the catalytic For phospholipase activity. Thr-177 bears the Phosphothreonine; by MAPK mark. Lys-209 carries the N6-acetyllysine; alternate modification. At Lys-209 the chain carries N6-succinyllysine; alternate.

The protein belongs to the peroxiredoxin family. Prx6 subfamily. In terms of assembly, homodimer. Interacts with GSTP1; mediates PRDX6 glutathionylation and regeneration. Interacts with APEX1. Interacts with STH. May interact with FAM168B. May interact with HTR2A. Post-translationally, phosphorylation at Thr-177 by MAP kinases increases the phospholipase activity of the enzyme. Phosphorylated form exhibits a greater lysophosphatidylcholine acyltransferase activity compared to the non-phosphorylated form. In terms of processing, irreversibly inactivated by overoxidation of Cys-47 to sulfinic acid (Cys-SO(2)H) and sulfonic acid (Cys-SO(3)H) forms upon oxidative stress.

It localises to the cytoplasm. The protein resides in the lysosome. It catalyses the reaction a hydroperoxide + 2 glutathione = an alcohol + glutathione disulfide + H2O. The catalysed reaction is a 1,2-diacyl-sn-glycero-3-phosphocholine + H2O = a 1-acyl-sn-glycero-3-phosphocholine + a fatty acid + H(+). The enzyme catalyses a 1-acyl-sn-glycero-3-phosphocholine + an acyl-CoA = a 1,2-diacyl-sn-glycero-3-phosphocholine + CoA. It carries out the reaction 1-hexadecanoyl-sn-glycero-3-phosphocholine + hexadecanoyl-CoA = 1,2-dihexadecanoyl-sn-glycero-3-phosphocholine + CoA. It catalyses the reaction 1,2-dihexadecanoyl-sn-glycero-3-phosphocholine + H2O = 1-hexadecanoyl-sn-glycero-3-phosphocholine + hexadecanoate + H(+). Thiol-specific peroxidase that catalyzes the reduction of hydrogen peroxide and organic hydroperoxides to water and alcohols, respectively. Can reduce H(2)O(2) and short chain organic, fatty acid, and phospholipid hydroperoxides. Also has phospholipase activity, can therefore either reduce the oxidized sn-2 fatty acyl group of phospholipids (peroxidase activity) or hydrolyze the sn-2 ester bond of phospholipids (phospholipase activity). These activities are dependent on binding to phospholipids at acidic pH and to oxidized phospholipds at cytosolic pH. Plays a role in cell protection against oxidative stress by detoxifying peroxides and in phospholipid homeostasis. Exhibits acyl-CoA-dependent lysophospholipid acyltransferase which mediates the conversion of lysophosphatidylcholine (1-acyl-sn-glycero-3-phosphocholine or LPC) into phosphatidylcholine (1,2-diacyl-sn-glycero-3-phosphocholine or PC). Shows a clear preference for LPC as the lysophospholipid and for palmitoyl CoA as the fatty acyl substrate. In Rattus norvegicus (Rat), this protein is Peroxiredoxin-6 (Prdx6).